A 262-amino-acid chain; its full sequence is Tethering factor for nuclear proteasome cut8 (262 aa).

This sequence belongs to the cut8/STS1 family. Binds the proteasome. The N-terminal part (residues 1 to 72) is polyubiquitinated by rhp6, which is required for the interaction with the proteasome.

It localises to the nucleus envelope. Its function is as follows. Together with nucleoporin alm1, tethers the proteasome to the nuclear envelope. Involved in ubiquitin-mediated protein degradation and facilitates the degradation of nuclear proteins like mitotic cyclin and cut2. Required for normal progression of anaphase. In Schizosaccharomyces pombe (strain 972 / ATCC 24843) (Fission yeast), this protein is Tethering factor for nuclear proteasome cut8.